A 452-amino-acid polypeptide reads, in one-letter code: Cell division protein FtsZ (452 aa).

Residues 24–28 (GAGSN), 111–113 (GTG), Glu-142, Arg-146, and Asp-190 each bind GTP.

It belongs to the FtsZ family. As to quaternary structure, homodimer. Polymerizes to form a dynamic ring structure in a strictly GTP-dependent manner. Interacts directly with several other division proteins.

The protein resides in the cytoplasm. Essential cell division protein that forms a contractile ring structure (Z ring) at the future cell division site. The regulation of the ring assembly controls the timing and the location of cell division. One of the functions of the FtsZ ring is to recruit other cell division proteins to the septum to produce a new cell wall between the dividing cells. Binds GTP and shows GTPase activity. This is Cell division protein FtsZ from Rickettsia prowazekii (strain Madrid E).